Here is a 201-residue protein sequence, read N- to C-terminus: MKWVWALLLLAALGSGRAERDCRVSSFRVKENFDKARFSGTWYAMAKKDPEGLFLQDNIVAEFSVDETGQMSATAKGRVRLLNNWDVCADMVGTFTDTEDPAKFKMKYWGVASFLQKGNDDHWIVDTDYDTYAVQYSCRLLNLDGTCADSYSFVFSRDPNGLPPEAQKIVRQRQEELCLARQYRLIVHNGYCDGRSERNLL.

The signal sequence occupies residues 1–18 (MKWVWALLLLAALGSGRA). Intrachain disulfides connect cysteine 22/cysteine 178, cysteine 88/cysteine 192, and cysteine 138/cysteine 147. Substrate is bound at residue glutamine 116. Arginine 139 carries the omega-N-methylarginine modification.

The protein belongs to the calycin superfamily. Lipocalin family. Interacts with TTR. Interaction with TTR prevents its loss by filtration through the kidney glomeruli. Interacts with STRA6. Detected in blood plasma and in urine (at protein level).

It localises to the secreted. In terms of biological role, retinol-binding protein that mediates retinol transport in blood plasma. Delivers retinol from the liver stores to the peripheral tissues. Transfers the bound all-trans retinol to STRA6, that then facilitates retinol transport across the cell membrane. This Homo sapiens (Human) protein is Retinol-binding protein 4 (RBP4).